Here is a 324-residue protein sequence, read N- to C-terminus: Probable UDP-sugar transporter protein SLC35A4 (324 aa).

Topologically, residues 1–18 are cytoplasmic; the sequence is MSVEDGGMPGLSRPRQAR. Residues 19 to 39 form a helical membrane-spanning segment; sequence WTLMLLLSTAMYGAHAPLLAL. Topologically, residues 40 to 52 are lumenal; the sequence is CHVDGRVPFRPSS. A helical transmembrane segment spans residues 53-73; sequence AVLLTELTKLLLCAFSLLVGW. At 74-85 the chain is on the cytoplasmic side; it reads QAWPQGAPPWRQ. A helical transmembrane segment spans residues 86 to 106; that stretch reads AAPFALSALLYGANNNLVIYL. Residues 107-142 are Lumenal-facing; it reads QRYMDPSTYQVLSNLKIGSTAVLYCLCLRHRLSVRQ. The helical transmembrane segment at 143 to 163 threads the bilayer; the sequence is GLALLLLMAAGACYAAGGLQV. The Cytoplasmic portion of the chain corresponds to 164-180; sequence PGNTLPRPPPAAAASPM. The chain crosses the membrane as a helical span at residues 181–201; the sequence is PLHITPLGLLLLILYCLISGL. Residues 202–214 lie on the Lumenal side of the membrane; it reads SSVYTELLMKRQQ. A helical membrane pass occupies residues 215-235; sequence LPLALQNLFLYTFGVLLNLGL. The Cytoplasmic segment spans residues 236 to 250; sequence HAGGGPGPGLLEGFS. A helical membrane pass occupies residues 251–271; that stretch reads GWAALVVLSQALNGLLMSVVM. Residues 272-275 lie on the Lumenal side of the membrane; it reads KHGS. The helical transmembrane segment at 276–298 threads the bilayer; it reads SITRLFVVSCSLVVNAVLSAVLL. Residues 299–324 are Cytoplasmic-facing; the sequence is RLQLTAAFFLATLLIGLAMRLYYGSR.

Belongs to the nucleotide-sugar transporter family. SLC35A subfamily. As to quaternary structure, found in a complex with SLC35A2 and SLC35A3.

It is found in the golgi apparatus membrane. It carries out the reaction CDP-L-ribitol(in) + CDP(out) = CDP-L-ribitol(out) + CDP(in). Mediates the transport of CDP-ribitol. Does not exhibit CMP-sialic acid, UDP-galactose and UDP-N-acetylglucosamine transport activity. This chain is Probable UDP-sugar transporter protein SLC35A4, found in Pongo abelii (Sumatran orangutan).